The sequence spans 206 residues: Small ribosomal subunit protein uS4 (206 aa).

The 61-residue stretch at 96 to 156 (CRLDNVVYRM…EKAKNQLRIV (61 aa)) folds into the S4 RNA-binding domain.

It belongs to the universal ribosomal protein uS4 family. As to quaternary structure, part of the 30S ribosomal subunit. Contacts protein S5. The interaction surface between S4 and S5 is involved in control of translational fidelity.

One of the primary rRNA binding proteins, it binds directly to 16S rRNA where it nucleates assembly of the body of the 30S subunit. Its function is as follows. With S5 and S12 plays an important role in translational accuracy. The protein is Small ribosomal subunit protein uS4 of Pseudomonas fluorescens (strain ATCC BAA-477 / NRRL B-23932 / Pf-5).